A 200-amino-acid chain; its full sequence is MTDVALIDAGGANLGSVRYALERLGVDARVVRDAAGLHGAQRVILPGVGAAPEAMSRLRTQGLVEPLRALQVPLIGICLGMQLLFEHSEEGDVECLGLLPGIVRHMTPALGIRVPHMGWNQLVPMRESALLAGLPERASAYFVHGYAAPVTADTVAACDHGGLFTAVVQNGLRCGAQFHPERSADTGARILRNFLEMSFP.

One can recognise a Glutamine amidotransferase type-1 domain in the interval 3–200; it reads DVALIDAGGA…LRNFLEMSFP (198 aa). Residue Cys-78 is the Nucleophile of the active site. Active-site residues include His-179 and Glu-181.

In terms of assembly, heterodimer of HisH and HisF.

It is found in the cytoplasm. It catalyses the reaction 5-[(5-phospho-1-deoxy-D-ribulos-1-ylimino)methylamino]-1-(5-phospho-beta-D-ribosyl)imidazole-4-carboxamide + L-glutamine = D-erythro-1-(imidazol-4-yl)glycerol 3-phosphate + 5-amino-1-(5-phospho-beta-D-ribosyl)imidazole-4-carboxamide + L-glutamate + H(+). It carries out the reaction L-glutamine + H2O = L-glutamate + NH4(+). It participates in amino-acid biosynthesis; L-histidine biosynthesis; L-histidine from 5-phospho-alpha-D-ribose 1-diphosphate: step 5/9. Functionally, IGPS catalyzes the conversion of PRFAR and glutamine to IGP, AICAR and glutamate. The HisH subunit catalyzes the hydrolysis of glutamine to glutamate and ammonia as part of the synthesis of IGP and AICAR. The resulting ammonia molecule is channeled to the active site of HisF. This chain is Imidazole glycerol phosphate synthase subunit HisH, found in Xanthomonas euvesicatoria pv. vesicatoria (strain 85-10) (Xanthomonas campestris pv. vesicatoria).